Here is a 309-residue protein sequence, read N- to C-terminus: NAD kinase (309 aa).

Catalysis depends on Asp-89, which acts as the Proton acceptor. Residues 89-90, 163-164, His-174, Arg-191, Asp-193, and 204-209 each bind NAD(+); these read DG, NE, and TAYSLS.

Belongs to the NAD kinase family. A divalent metal cation is required as a cofactor.

The protein localises to the cytoplasm. It catalyses the reaction NAD(+) + ATP = ADP + NADP(+) + H(+). Involved in the regulation of the intracellular balance of NAD and NADP, and is a key enzyme in the biosynthesis of NADP. Catalyzes specifically the phosphorylation on 2'-hydroxyl of the adenosine moiety of NAD to yield NADP. The sequence is that of NAD kinase from Shewanella denitrificans (strain OS217 / ATCC BAA-1090 / DSM 15013).